The sequence spans 160 residues: Dysbindin domain-containing protein 1 (160 aa).

Phosphoserine occurs at positions 3, 97, and 121. Positions alanine 95 to aspartate 160 are disordered. The segment covering threonine 127–arginine 143 has biased composition (basic and acidic residues).

This sequence belongs to the dysbindin family.

The chain is Dysbindin domain-containing protein 1 (Dbndd1) from Mus musculus (Mouse).